A 294-amino-acid polypeptide reads, in one-letter code: Tetraspanin-15 (294 aa).

Residues Met-1 to Ser-23 lie on the Cytoplasmic side of the membrane. Residues Leu-24–Tyr-44 form a helical membrane-spanning segment. Topologically, residues Ala-45 to Pro-62 are extracellular. Residues Ala-63 to Ala-83 traverse the membrane as a helical segment. At Ser-84–Gln-93 the chain is on the cytoplasmic side. The chain crosses the membrane as a helical span at residues Ala-94–Leu-114. The Extracellular segment spans residues Ile-115 to Ala-235. The N-linked (GlcNAc...) asparagine glycan is linked to Asn-118. 4 disulfide bridges follow: Cys-154–Cys-219, Cys-155–Cys-185, Cys-171–Cys-179, and Cys-186–Cys-198. 2 N-linked (GlcNAc...) asparagine glycosylation sites follow: Asn-189 and Asn-230. A helical membrane pass occupies residues Gly-236–Ile-256. The Cytoplasmic segment spans residues Thr-257–Ile-294.

It belongs to the tetraspanin (TM4SF) family. In terms of assembly, interacts with ADAM10; the interaction influences ADAM10 substrate specificity, endocytosis and turnover. Palmitoylated.

The protein resides in the cell membrane. It is found in the late endosome membrane. Functionally, part of TspanC8 subgroup, composed of 6 members that interact with the transmembrane metalloprotease ADAM10. This interaction is required for ADAM10 exit from the endoplasmic reticulum and for enzymatic maturation and trafficking to the cell surface as well as substrate specificity. Different TspanC8/ADAM10 complexes have distinct substrates. Promotes ADAM10-mediated cleavage of CDH2. Negatively regulates ligand-induced Notch activity probably by regulating ADAM10 activity. This Bos taurus (Bovine) protein is Tetraspanin-15 (TSPAN15).